The sequence spans 555 residues: Energy-dependent translational throttle protein EttA (555 aa).

ABC transporter domains lie at 6 to 259 (YTMH…AQEA) and 324 to 550 (LEVS…RIKY). 39-46 (GLNGAGKS) serves as a coordination point for ATP. The segment at 95–139 (SEVVNALKRLDEVYALYADPDADFDKLAAEQGRLEEIIQAHDGHN) is arm. The tract at residues 242–322 (GNYSSWLEQK…IPPGPRLGDK (81 aa)) is ptIM. Position 356–363 (356–363 (GPNGAGKS)) interacts with ATP.

Belongs to the ABC transporter superfamily. ABCF family. Translational throttle EttA subfamily. As to quaternary structure, monomer. Probably contacts ribosomal proteins L1, L5, L33 and S7, the 16S and 23S rRNA and the P-site containing tRNA(fMet).

The protein localises to the cytoplasm. The catalysed reaction is ATP + H2O = ADP + phosphate + H(+). In terms of biological role, a translation factor that gates the progression of the 70S ribosomal initiation complex (IC, containing tRNA(fMet) in the P-site) into the translation elongation cycle by using a mechanism sensitive to the ATP/ADP ratio. Binds to the 70S ribosome E-site where it modulates the state of the translating ribosome during subunit translocation. ATP hydrolysis probably frees it from the ribosome, which can enter the elongation phase. This chain is Energy-dependent translational throttle protein EttA, found in Escherichia coli O6:H1 (strain CFT073 / ATCC 700928 / UPEC).